The sequence spans 101 residues: Large ribosomal subunit protein eL31 (101 aa).

This sequence belongs to the eukaryotic ribosomal protein eL31 family.

The protein is Large ribosomal subunit protein eL31 of Ignicoccus hospitalis (strain KIN4/I / DSM 18386 / JCM 14125).